Consider the following 237-residue polypeptide: Uridylate kinase (237 aa).

Residue 12–15 (KLSG) participates in ATP binding. The involved in allosteric activation by GTP stretch occupies residues 20–25 (GEDGLG). UMP is bound at residue G54. ATP-binding residues include G55 and R59. UMP contacts are provided by residues D74 and 135–142 (TGNPFFTT). 3 residues coordinate ATP: T162, Y168, and D171.

The protein belongs to the UMP kinase family. Homohexamer.

It localises to the cytoplasm. The enzyme catalyses UMP + ATP = UDP + ADP. It functions in the pathway pyrimidine metabolism; CTP biosynthesis via de novo pathway; UDP from UMP (UMPK route): step 1/1. Allosterically activated by GTP. Inhibited by UTP. Functionally, catalyzes the reversible phosphorylation of UMP to UDP. The polypeptide is Uridylate kinase (pyrH) (Haemophilus influenzae (strain ATCC 51907 / DSM 11121 / KW20 / Rd)).